Consider the following 1274-residue polypeptide: MSSSQDYNNNSNNTPARVSSRKGKNLHVAHRRSPSELTNLMVEQYNLQRQLEEVQAQQKLLEEKQKQQQQQFTYPSAQGSSELAPPPISSGYGGNRSSHSRSSSINTHRRTGSGSGGTAHGHSRRHSLGLNEAIKAAANQKQSNRNSLSPTIPNEAKTDSSDDIGSFKFPPSGGDQGDTSGQSSSSHNRSRSLAYGQQSFKFPPTPDQSNDTRGNSLLPPNPNFSVTQSPDRGHNRRSSHFRTGSRGSGSNTNTDGINSNWRAQQQSPQQQQRQGGLLEPPQVGFTPGHKPRNSSYGGGSSVSSLQQFLPNNGGSNNSGQQGGHQGGGNNGRKTLFAPYLPQSSLPELINEGRLVTGTLRVNKKNRSDAYVSTDGLLDADIFICGSKDRNRALEGDLVAVELLIVDEVWESKKEKEEKKRRKDNTLHSRPLTDDIHNDATSAPNTAEGSVTGTSKEDGAGSNEEETGGLARRGSLKQRPTMKKNDDVEVEGQSLLLVEEEEINDEIKPLYAGHVVAVVDRIPGQLFAGTLGLLRPAQAAQAARDKKNGKESTVQNPKAPKIVWFKPTDKKVPLIAIPTEQAPKDFVENHEKYADRLFVASIKRWPITSLHPFGTLVSNLGPIDSPETEIDSILRDNNFLCDEYPDDDNDDIVSVNAYDLPSIEPEFENTQREEYLNDYIIAFTQNGEFVDHALHVKRISNTKIELGFHVADIAYFIKPGSSLDRKSKKRSSSVFLPQKTVNLFPKQVNKIVSFKENEKNLAVSVVFEIDTSNFEVEDLYIHESVIVPKQLVTYDAFDTILSGQSVDSISSATSDYVKTFSLIAKEFRRHRLSNRSLGITPNLTLLDQLDDEKVRLDLNIFKDSLAFDVISEISHKVNSAIAAKVHAGLGDQAILRRHPLPTLQKMETFVRKATSLGFKIDTTTSSTLQNSILKIDDPVKRKCVETLLYKCMSRGRYYVAGKQDTDSYAHYYFNLPLYTHFTAPLRRYADLIVHRQLKAVLNKQVEDKDLDSLKAITDYCNFKKDCAANAQEQAIHLLLSQTINEMSETAGQLLCMGTVVQVYESSFDVFIPEFGVEKRVHGDQLPLVKAEFDKNERILELWWEKGVDSATYIPPDEKSSLSYRNSIKNKYRTSALQAAKIQSKTALEKSTTPADSVAEKLAKLNLEPPKLVVPSLKSNELHEVEKDETKSMPSSPTQSEIPKNVRTNSSSRISSSGNTFSLEPYLQNTITRIEGDSYIQVIKELTQVPVLLRAEIGMALPCLTVRVLNPFAEEQ.

Residues 1–13 (MSSSQDYNNNSNN) show a composition bias toward low complexity. Disordered regions lie at residues 1–38 (MSSS…SELT), 61–124 (LEEK…GHSR), 138–337 (ANQK…TLFA), and 413–488 (KEKE…DDVE). Positions 19–32 (SSRKGKNLHVAHRR) are enriched in basic residues. Polar residues predominate over residues 72–81 (FTYPSAQGSS). Residues 95–106 (NRSSHSRSSSIN) are compositionally biased toward low complexity. Over residues 139–152 (NQKQSNRNSLSPTI) the composition is skewed to polar residues. Residues 177–187 (GDTSGQSSSSH) are compositionally biased toward low complexity. Positions 248–263 (SGSNTNTDGINSNWRA) are enriched in polar residues. The segment covering 264-282 (QQQSPQQQQRQGGLLEPPQ) has biased composition (low complexity). Over residues 320–330 (QQGGHQGGGNN) the composition is skewed to gly residues. The span at 413–437 (KEKEEKKRRKDNTLHSRPLTDDIHN) shows a compositional bias: basic and acidic residues. Positions 438 to 453 (DATSAPNTAEGSVTGT) are enriched in polar residues. Residues 562–637 (VWFKPTDKKV…EIDSILRDNN (76 aa)) form the CSD2 domain. The region spanning 688–1001 (FVDHALHVKR…VHRQLKAVLN (314 aa)) is the RNB domain. The DIS3L2 C-terminal domain maps to 1050–1136 (GQLLCMGTVV…KNKYRTSALQ (87 aa)). Residues 1174 to 1217 (SLKSNELHEVEKDETKSMPSSPTQSEIPKNVRTNSSSRISSSGN) form a disordered region. A compositionally biased stretch (basic and acidic residues) spans 1178 to 1189 (NELHEVEKDETK). Positions 1190 to 1207 (SMPSSPTQSEIPKNVRTN) are enriched in polar residues.

The protein belongs to the RNR ribonuclease family.

Plays a role in resistance to host antimicrobial peptides such as protamine, RP-1, or human beta-defensin-2; allowing colonization of human tissues. Required for resistance to membrane permeabilization and maintenance of mitochondrial membrane potential upon exposure to RP-1. The chain is Virulence protein SSD1 (SSD1) from Candida albicans (strain SC5314 / ATCC MYA-2876) (Yeast).